A 573-amino-acid chain; its full sequence is Membrane protein insertase YidC (573 aa).

The next 6 membrane-spanning stretches (helical) occupy residues 6–26, 355–375, 379–399, 446–466, 488–508, and 524–544; these read VFLIFAWLMVAALLWMEWGKD, FSIMAIIGQGLFWVLSHLHSF, WGWAIIGLVVLLRLALYPLSA, GGCLPLLIQMPIFFALYWVLV, PYFILPVLNIAIMWATQKLTP, and PLVFGVMMAFMPAGLVLYWVV.

Belongs to the OXA1/ALB3/YidC family. Type 1 subfamily. As to quaternary structure, interacts with the Sec translocase complex via SecD. Specifically interacts with transmembrane segments of nascent integral membrane proteins during membrane integration.

Its subcellular location is the cell inner membrane. In terms of biological role, required for the insertion and/or proper folding and/or complex formation of integral membrane proteins into the membrane. Involved in integration of membrane proteins that insert both dependently and independently of the Sec translocase complex, as well as at least some lipoproteins. Aids folding of multispanning membrane proteins. The polypeptide is Membrane protein insertase YidC (Xanthomonas campestris pv. campestris (strain ATCC 33913 / DSM 3586 / NCPPB 528 / LMG 568 / P 25)).